The following is a 377-amino-acid chain: Protein RecA (377 aa).

76-83 (GPESSGKT) contributes to the ATP binding site.

Belongs to the RecA family.

The protein resides in the cytoplasm. In terms of biological role, can catalyze the hydrolysis of ATP in the presence of single-stranded DNA, the ATP-dependent uptake of single-stranded DNA by duplex DNA, and the ATP-dependent hybridization of homologous single-stranded DNAs. It interacts with LexA causing its activation and leading to its autocatalytic cleavage. This is Protein RecA from Corynebacterium aurimucosum (strain ATCC 700975 / DSM 44827 / CIP 107346 / CN-1) (Corynebacterium nigricans).